The following is a 202-amino-acid chain: Protein-methionine-sulfoxide reductase heme-binding subunit MsrQ (202 aa).

6 helical membrane-spanning segments follow: residues 8–28, 42–62, 75–95, 110–130, 147–167, and 169–189; these read LAVFLGALAVPAWWLYQAWIF, LGLGALVLLLLTLAMTPLQKL, LGLWCFTYVLLHLSAYCVFIL, PYIIVGMLGFICLFLLAITSN, LVYLILGLGLLHMLWVVRADL, and EWTLYAVVGASLMLLRLPSIA.

It belongs to the MsrQ family. Heterodimer of a catalytic subunit (MsrP) and a heme-binding subunit (MsrQ). The cofactor is FMN. Heme b is required as a cofactor.

Its subcellular location is the cell inner membrane. Part of the MsrPQ system that repairs oxidized periplasmic proteins containing methionine sulfoxide residues (Met-O), using respiratory chain electrons. Thus protects these proteins from oxidative-stress damage caused by reactive species of oxygen and chlorine generated by the host defense mechanisms. MsrPQ is essential for the maintenance of envelope integrity under bleach stress, rescuing a wide series of structurally unrelated periplasmic proteins from methionine oxidation. MsrQ provides electrons for reduction to the reductase catalytic subunit MsrP, using the quinone pool of the respiratory chain. The protein is Protein-methionine-sulfoxide reductase heme-binding subunit MsrQ of Pseudomonas aeruginosa (strain LESB58).